Reading from the N-terminus, the 151-residue chain is Small ribosomal subunit protein uS13 (151 aa).

A disordered region spans residues 131 to 151; that stretch reads RGQRTKSSFRRGRTVGVKKKQ. Positions 133 to 151 are enriched in basic residues; it reads QRTKSSFRRGRTVGVKKKQ.

It belongs to the universal ribosomal protein uS13 family. As to quaternary structure, part of the 30S ribosomal subunit. Forms a loose heterodimer with protein S19. Forms two bridges to the 50S subunit in the 70S ribosome.

Functionally, located at the top of the head of the 30S subunit, it contacts several helices of the 16S rRNA. In the 70S ribosome it contacts the 23S rRNA (bridge B1a) and protein L5 of the 50S subunit (bridge B1b), connecting the 2 subunits; these bridges are implicated in subunit movement. The polypeptide is Small ribosomal subunit protein uS13 (Methanopyrus kandleri (strain AV19 / DSM 6324 / JCM 9639 / NBRC 100938)).